The chain runs to 141 residues: Putative lipoprotein Tanf_09445 (141 aa).

The N-terminal stretch at M1–G20 is a signal peptide. C21 carries the N-palmitoyl cysteine lipid modification. The S-diacylglycerol cysteine moiety is linked to residue C21.

The protein localises to the cell membrane. The chain is Putative lipoprotein Tanf_09445 from Tannerella forsythia (strain ATCC 43037 / JCM 10827 / CCUG 21028 A / KCTC 5666 / FDC 338) (Bacteroides forsythus).